Consider the following 95-residue polypeptide: Oxytetracycline polyketide synthase acyl carrier protein (95 aa).

The Carrier domain maps to 3–81 (LLTLSDLLTL…ALIEMTNASL (79 aa)). An O-(pantetheine 4'-phosphoryl)serine modification is found at S41.

In terms of processing, 4'-phosphopantetheine is transferred from CoA to a specific serine of the apo-ACP-like protein.

It functions in the pathway antibiotic biosynthesis; oxytetracycline biosynthesis. In terms of biological role, acyl carrier protein. The protein is Oxytetracycline polyketide synthase acyl carrier protein of Streptomyces rimosus.